The primary structure comprises 705 residues: Polyribonucleotide nucleotidyltransferase (705 aa).

Mg(2+) is bound by residues aspartate 487 and aspartate 493. In terms of domain architecture, KH spans 554–613 (PKILTMKINPDKIRDVIGPSGKQINKIIEDTGVKIDIEQDGTIFISSTEEDMNQKAKKII). Positions 623 to 691 (GQLYLGKVKR…KQGRVNLSRK (69 aa)) constitute an S1 motif domain.

It belongs to the polyribonucleotide nucleotidyltransferase family. Mg(2+) is required as a cofactor.

It localises to the cytoplasm. It catalyses the reaction RNA(n+1) + phosphate = RNA(n) + a ribonucleoside 5'-diphosphate. Involved in mRNA degradation. Catalyzes the phosphorolysis of single-stranded polyribonucleotides processively in the 3'- to 5'-direction. The chain is Polyribonucleotide nucleotidyltransferase from Bacillus pumilus (strain SAFR-032).